The chain runs to 184 residues: Ribosome-recycling factor (184 aa).

The protein belongs to the RRF family.

It is found in the cytoplasm. Responsible for the release of ribosomes from messenger RNA at the termination of protein biosynthesis. May increase the efficiency of translation by recycling ribosomes from one round of translation to another. In Onion yellows phytoplasma (strain OY-M), this protein is Ribosome-recycling factor.